Consider the following 207-residue polypeptide: MDRLLVLVRHGQSDWNLKNLFTGWKDPDLTEKGIGEAQAAGRGLKAKGLAFDIAFTSALTRAQHTLKLILGELGTPDVPTTREQALNERDYGDLSGLNKDDARQKWGEEQVHVWRRSYDISPPGGESLKDTVARVLPYYCQSILPAVLDGKKTIVAAHGNSLRALVMVLDGLTPETIPSMELETGVPLIYRLRANSTVESKEVLKLG.

Substrate contacts are provided by residues 9 to 16, 22 to 23, R61, 88 to 91, K99, 115 to 116, and 159 to 160; these read RHGQSDWN, TG, ERDY, RR, and GN. H10 (tele-phosphohistidine intermediate) is an active-site residue. E88 functions as the Proton donor/acceptor in the catalytic mechanism.

It belongs to the phosphoglycerate mutase family. BPG-dependent PGAM subfamily. As to quaternary structure, homodimer.

The catalysed reaction is (2R)-2-phosphoglycerate = (2R)-3-phosphoglycerate. It functions in the pathway carbohydrate degradation; glycolysis; pyruvate from D-glyceraldehyde 3-phosphate: step 3/5. Catalyzes the interconversion of 2-phosphoglycerate and 3-phosphoglycerate. The sequence is that of 2,3-bisphosphoglycerate-dependent phosphoglycerate mutase from Beijerinckia indica subsp. indica (strain ATCC 9039 / DSM 1715 / NCIMB 8712).